The following is a 120-amino-acid chain: Large ribosomal subunit protein bL12 (120 aa).

It belongs to the bacterial ribosomal protein bL12 family. In terms of assembly, homodimer. Part of the ribosomal stalk of the 50S ribosomal subunit. Forms a multimeric L10(L12)X complex, where L10 forms an elongated spine to which 2 to 4 L12 dimers bind in a sequential fashion. Binds GTP-bound translation factors.

Functionally, forms part of the ribosomal stalk which helps the ribosome interact with GTP-bound translation factors. Is thus essential for accurate translation. The sequence is that of Large ribosomal subunit protein bL12 from Listeria innocua serovar 6a (strain ATCC BAA-680 / CLIP 11262).